An 81-amino-acid polypeptide reads, in one-letter code: MATLILKQTLIILLIIFSLQTLSSQARILRSYRAVSMGNMDSQVLLHELGFDLSKFKGHNERRFLVSSDRVSPGGPDPQHH.

The signal sequence occupies residues 1 to 26; sequence MATLILKQTLIILLIIFSLQTLSSQA. 2 positions are modified to hydroxyproline: P73 and P76. P76 is a glycosylation site (O-linked (Ara...) hydroxyproline).

This sequence belongs to the CLV3/ESR signal peptide family. Post-translationally, the O-glycosylation (arabinosylation) of the hydroxyproline Pro-76 enhances binding affinity of the CLE5p peptide for its receptor. In terms of tissue distribution, mostly expressed in roots, and, to a lower extent, in seedlings, stems, apex, flowers and siliques.

It localises to the secreted. The protein resides in the extracellular space. Its function is as follows. Extracellular signal peptide that regulates cell fate. The protein is CLAVATA3/ESR (CLE)-related protein 5 of Arabidopsis thaliana (Mouse-ear cress).